Reading from the N-terminus, the 458-residue chain is tRNA-2-methylthio-N(6)-dimethylallyladenosine synthase (458 aa).

The MTTase N-terminal domain occupies 2–118 (PKLYIKTYGC…VFEHVDGILR (117 aa)). Positions 11, 47, 81, 170, 174, and 177 each coordinate [4Fe-4S] cluster. Positions 156–389 (PGVRSTAYVS…LAVVNEIAIR (234 aa)) constitute a Radical SAM core domain. The region spanning 392-455 (RDLVGTVQEV…GFTLYGVPCP (64 aa)) is the TRAM domain.

Belongs to the methylthiotransferase family. MiaB subfamily. Monomer. The cofactor is [4Fe-4S] cluster.

It localises to the cytoplasm. The catalysed reaction is N(6)-dimethylallyladenosine(37) in tRNA + (sulfur carrier)-SH + AH2 + 2 S-adenosyl-L-methionine = 2-methylsulfanyl-N(6)-dimethylallyladenosine(37) in tRNA + (sulfur carrier)-H + 5'-deoxyadenosine + L-methionine + A + S-adenosyl-L-homocysteine + 2 H(+). Functionally, catalyzes the methylthiolation of N6-(dimethylallyl)adenosine (i(6)A), leading to the formation of 2-methylthio-N6-(dimethylallyl)adenosine (ms(2)i(6)A) at position 37 in tRNAs that read codons beginning with uridine. This chain is tRNA-2-methylthio-N(6)-dimethylallyladenosine synthase, found in Akkermansia muciniphila (strain ATCC BAA-835 / DSM 22959 / JCM 33894 / BCRC 81048 / CCUG 64013 / CIP 107961 / Muc).